A 233-amino-acid chain; its full sequence is MIFPSPLTEARLIRRYKRFLADVVLADGTELTVSVPNTGSMLGLTAPGSRVLLSKWDDPKRKYPYRLEIVEADGTLVGINTGLPNRLAAEAIRARLVGDLGTYPVIRPEQRYGERSRIDFLLEHPERPPAYVEVKNVHFMREAGLAEFPDTRTDRGARHLDELAAMRRAGNRAVMIYVVQRADCSRFRLCADLDASYAAAFGRARDAGVEAFVIGCQISADAIAPDRLIDLDF.

This sequence belongs to the SfsA family.

The sequence is that of Sugar fermentation stimulation protein homolog from Chelativorans sp. (strain BNC1).